The chain runs to 543 residues: Telomerase Cajal body protein 1 homolog (543 aa).

Positions 95 to 128 (GRPKNAVESPHAGVPMETSLAAEEEANGDEEEES) are disordered. Positions 116–127 (AEEEANGDEEEE) are enriched in acidic residues. WD repeat units lie at residues 237-283 (PEGG…LRCS), 291-329 (DEVM…RFCD), and 378-421 (GHKG…QPLV).

Belongs to the TCAB1 family.

It is found in the nucleus. It localises to the cajal body. In terms of biological role, RNA chaperone that plays a key role in Cajal body formation. Specifically recognizes and binds the Cajal body box (CAB box) present in both small Cajal body RNAs (scaRNAs). Probably acts by mediating localization of scaRNAs to Cajal bodies. This chain is Telomerase Cajal body protein 1 homolog, found in Drosophila melanogaster (Fruit fly).